Consider the following 416-residue polypeptide: Enterobactin exporter EntS (416 aa).

Residues 1–21 (MNKQSWLLNLSLLKTHPAFRA) lie on the Cytoplasmic side of the membrane. A helical transmembrane segment spans residues 22-42 (VFLARFISIVSLGLLGVAVPV). The Periplasmic segment spans residues 43 to 55 (QIQMMTHSTWQVG). The chain crosses the membrane as a helical span at residues 56–76 (LSVTLTGGAMFVGLMVGGVLA). At 77–83 (DRYERKK) the chain is on the cytoplasmic side. A helical transmembrane segment spans residues 84-104 (VILLARGTCGIGFIGLCLNAL). The Periplasmic portion of the chain corresponds to 105-109 (LPEPS). Residues 110–130 (LLAIYLLGLWDGFFASLGVTA) form a helical membrane-spanning segment. Topologically, residues 131–156 (LLAATPALVGRENLMQAGAITMLTVR) are cytoplasmic. Residues 157 to 177 (LGSVISPMIGGLLLATGGVAW) traverse the membrane as a helical segment. Position 178 (N178) is a topological domain, periplasmic. Residues 179-199 (YGLAAAGTFITLLPLLSLPAL) form a helical membrane-spanning segment. Over 200–218 (PPPPQPREHPLKSLLAGFR) the chain is Cytoplasmic. A helical membrane pass occupies residues 219 to 239 (FLLASPLVGGIALLGGLLTMA). The Periplasmic portion of the chain corresponds to 240–256 (SAVRVLYPALADNWQMS). The helical transmembrane segment at 257-277 (AAQIGFLYAAIPLGAAIGALT) threads the bilayer. The Cytoplasmic portion of the chain corresponds to 278–287 (SGKLAHSARP). The chain crosses the membrane as a helical span at residues 288–307 (GLLMLLSTLGSFLAIGLFGL). Residues 308-313 (MPMWIL) are Periplasmic-facing. The helical transmembrane segment at 314-336 (GVICLALFGWLSAVSSLLQYTML) threads the bilayer. Topologically, residues 337 to 356 (QTQTPEAMLGRINGLWTAQN) are cytoplasmic. A helical transmembrane segment spans residues 357 to 377 (VTGDAIGAALLGGLGAMMTPV). Position 378 (A378) is a topological domain, periplasmic. The chain crosses the membrane as a helical span at residues 379–399 (SASASGFGLLIIGVLLLLVLV). At 400–416 (ELRRFRQTPPQVTASDS) the chain is on the cytoplasmic side.

Belongs to the major facilitator superfamily. EntS (TC 2.A.1.38) family.

The protein localises to the cell inner membrane. Its function is as follows. Component of an export pathway for enterobactin. This chain is Enterobactin exporter EntS, found in Escherichia coli O81 (strain ED1a).